The following is a 102-amino-acid chain: Protein PAPPAS (102 aa).

2 helical membrane passes run 13–33 (LFLT…FVKW) and 82–102 (IGSD…FFFF).

In terms of tissue distribution, expressed in placenta with lower expression in brain, kidney and testis.

Its subcellular location is the endoplasmic reticulum membrane. The polypeptide is Protein PAPPAS (PAPPA-AS1) (Homo sapiens (Human)).